The sequence spans 230 residues: Orotidine 5'-phosphate decarboxylase (230 aa).

Substrate is bound by residues Asp-11, Lys-34, 61-70, Thr-117, Arg-179, Gln-188, Gly-208, and Arg-209; that span reads DLKLHDIPNT. Lys-63 functions as the Proton donor in the catalytic mechanism.

The protein belongs to the OMP decarboxylase family. Type 1 subfamily. In terms of assembly, homodimer.

It carries out the reaction orotidine 5'-phosphate + H(+) = UMP + CO2. It functions in the pathway pyrimidine metabolism; UMP biosynthesis via de novo pathway; UMP from orotate: step 2/2. In terms of biological role, catalyzes the decarboxylation of orotidine 5'-monophosphate (OMP) to uridine 5'-monophosphate (UMP). The protein is Orotidine 5'-phosphate decarboxylase of Streptococcus pyogenes serotype M6 (strain ATCC BAA-946 / MGAS10394).